Reading from the N-terminus, the 584-residue chain is Ras-specific guanine nucleotide-releasing factor RalGPS1 (584 aa).

A compositionally biased stretch (polar residues) spans 1–13; it reads MDLMNGQSSSVNI. Disordered stretches follow at residues 1–29, 285–338, and 380–407; these read MDLM…SLSD, IEPG…IPHG, and HVPS…SELS. The span at 14-26 shows a compositional bias: low complexity; that stretch reads AATASEKSSSSES. Positions 50–288 constitute a Ras-GEF domain; that stretch reads TPEEYAGQIT…YKLSLKIEPG (239 aa). A PXXP motif is present at residues 326 to 329; it reads PTPP. Residues 388 to 404 show a composition bias toward low complexity; sequence ESSTLSSGISIGSSDGS. The PH domain occupies 458 to 570; that stretch reads AVTIQGVLRR…WFKHLSAACQ (113 aa).

The protein resides in the cytoplasm. It is found in the cell membrane. Functionally, guanine nucleotide exchange factor. May be involved in cytoskeletal organization. This Gallus gallus (Chicken) protein is Ras-specific guanine nucleotide-releasing factor RalGPS1 (RALGPS1).